Consider the following 391-residue polypeptide: Formate-dependent phosphoribosylglycinamide formyltransferase (391 aa).

N(1)-(5-phospho-beta-D-ribosyl)glycinamide-binding positions include 20–21 (EL) and Glu-80. ATP-binding positions include Arg-112, Lys-153, 158–163 (SSGKGQ), 193–196 (EGFV), and Glu-201. Positions 117–306 (RLAAEELGLP…EFALHVRAFT (190 aa)) constitute an ATP-grasp domain. The Mg(2+) site is built by Glu-265 and Glu-277. N(1)-(5-phospho-beta-D-ribosyl)glycinamide contacts are provided by residues Asp-284, Lys-354, and 361–362 (RR).

This sequence belongs to the PurK/PurT family. Homodimer.

It catalyses the reaction N(1)-(5-phospho-beta-D-ribosyl)glycinamide + formate + ATP = N(2)-formyl-N(1)-(5-phospho-beta-D-ribosyl)glycinamide + ADP + phosphate + H(+). The protein operates within purine metabolism; IMP biosynthesis via de novo pathway; N(2)-formyl-N(1)-(5-phospho-D-ribosyl)glycinamide from N(1)-(5-phospho-D-ribosyl)glycinamide (formate route): step 1/1. Involved in the de novo purine biosynthesis. Catalyzes the transfer of formate to 5-phospho-ribosyl-glycinamide (GAR), producing 5-phospho-ribosyl-N-formylglycinamide (FGAR). Formate is provided by PurU via hydrolysis of 10-formyl-tetrahydrofolate. The chain is Formate-dependent phosphoribosylglycinamide formyltransferase from Vibrio cholerae serotype O1 (strain ATCC 39315 / El Tor Inaba N16961).